A 398-amino-acid polypeptide reads, in one-letter code: Cysteine protease ATG4A (398 aa).

Cys77 (nucleophile) is an active-site residue. Residues Asp279 and His281 contribute to the active site. The short motif at 393–396 is the LIR element; the sequence is FEIL.

Belongs to the peptidase C54 family. As to quaternary structure, interacts with ATG9A; the interaction is direct.

It localises to the cytoplasm. The catalysed reaction is [protein]-C-terminal L-amino acid-glycyl-phosphatidylethanolamide + H2O = [protein]-C-terminal L-amino acid-glycine + a 1,2-diacyl-sn-glycero-3-phosphoethanolamine. Inhibited by N-ethylmaleimide. Redox-regulated during autophagy since reducing conditions activate ATG4A whereas an oxidizing environment such as the presence of H(2)O(2) inhibits its activity. In terms of biological role, cysteine protease that plays a key role in autophagy by mediating both proteolytic activation and delipidation of ATG8 family proteins. The protease activity is required for proteolytic activation of ATG8 family proteins: cleaves the C-terminal amino acid of ATG8 proteins to reveal a C-terminal glycine. Exposure of the glycine at the C-terminus is essential for ATG8 proteins conjugation to phosphatidylethanolamine (PE) and insertion to membranes, which is necessary for autophagy. Preferred substrate is GABARAPL2 followed by MAP1LC3A and GABARAP. Protease activity is also required to counteract formation of high-molecular weight conjugates of ATG8 proteins (ATG8ylation): acts as a deubiquitinating-like enzyme that removes ATG8 conjugated to other proteins, such as ATG3. In addition to the protease activity, also mediates delipidation of ATG8 family proteins. Catalyzes delipidation of PE-conjugated forms of ATG8 proteins during macroautophagy. Compared to ATG4B, the major protein for proteolytic activation of ATG8 proteins, shows weaker ability to cleave the C-terminal amino acid of ATG8 proteins, while it displays stronger delipidation activity. Involved in phagophore growth during mitophagy independently of its protease activity and of ATG8 proteins: acts by regulating ATG9A trafficking to mitochondria and promoting phagophore-endoplasmic reticulum contacts during the lipid transfer phase of mitophagy. In Homo sapiens (Human), this protein is Cysteine protease ATG4A.